We begin with the raw amino-acid sequence, 405 residues long: DNA primase DnaG (405 aa).

One can recognise a Toprim domain in the interval 172–248 (DAIIIVEGRA…HVDYIARAPP (77 aa)). Mg(2+)-binding residues include E178, D222, and D224. A disordered region spans residues 279–303 (ASGERAEAPPQPAQQPQQEQPAPQR). A compositionally biased stretch (low complexity) spans 292–303 (QQPQQEQPAPQR).

Belongs to the archaeal DnaG primase family. Forms a ternary complex with MCM helicase and DNA. Component of the archaeal exosome complex. Mg(2+) is required as a cofactor.

The catalysed reaction is ssDNA + n NTP = ssDNA/pppN(pN)n-1 hybrid + (n-1) diphosphate.. Its function is as follows. RNA polymerase that catalyzes the synthesis of short RNA molecules used as primers for DNA polymerase during DNA replication. Also part of the exosome, which is a complex involved in RNA degradation. Acts as a poly(A)-binding protein that enhances the interaction between heteromeric, adenine-rich transcripts and the exosome. This is DNA primase DnaG from Pyrobaculum arsenaticum (strain DSM 13514 / JCM 11321 / PZ6).